A 503-amino-acid polypeptide reads, in one-letter code: Ribose import ATP-binding protein RbsA (503 aa).

2 ABC transporter domains span residues 10 to 246 and 256 to 500; these read LEVR…VGRD and VEPG…TGSE. 42–49 contacts ATP; that stretch reads GENGAGKS.

This sequence belongs to the ABC transporter superfamily. Ribose importer (TC 3.A.1.2.1) family. The complex is composed of an ATP-binding protein (RbsA), two transmembrane proteins (RbsC) and a solute-binding protein (RbsB).

It is found in the cell membrane. It catalyses the reaction D-ribose(out) + ATP + H2O = D-ribose(in) + ADP + phosphate + H(+). Its function is as follows. Part of the ABC transporter complex RbsABC involved in ribose import. Responsible for energy coupling to the transport system. In Rhodococcus jostii (strain RHA1), this protein is Ribose import ATP-binding protein RbsA.